A 339-amino-acid chain; its full sequence is Alcohol dehydrogenase (339 aa).

Zn(2+)-binding residues include Cys38, His61, Cys92, Cys95, Cys98, Cys106, and Cys148. NAD(+) is bound by residues 172–177 (GIGGLG), Asp195, Lys200, 260–262 (VGL), and Arg331.

This sequence belongs to the zinc-containing alcohol dehydrogenase family. It depends on Zn(2+) as a cofactor.

The catalysed reaction is a primary alcohol + NAD(+) = an aldehyde + NADH + H(+). The enzyme catalyses a secondary alcohol + NAD(+) = a ketone + NADH + H(+). The rate-limiting step is NADH release. Catabolite repression. In terms of biological role, active with primary alcohols, including methanol. The polypeptide is Alcohol dehydrogenase (adh) (Geobacillus stearothermophilus (Bacillus stearothermophilus)).